Consider the following 777-residue polypeptide: Ribosome biogenesis protein ERB1 (777 aa).

A disordered region spans residues 1-122 (MAPTAPAKKR…RPNYRVVEDA (122 aa)). A compositionally biased stretch (acidic residues) spans 36–67 (SEDDSDFVASGDEDEEDEDEDEDEDKDEDDEH). WD repeat units follow at residues 430–469 (GHEGRVRSSAIDPTGLWLATGGDDGYVRIWLINPARQVWA), 473–513 (SSDE…PEVE), 562–604 (TVRS…SQIP), 606–645 (RKLSGLAQVAHFHPSRPLFFVATQRTIRCYDLQRLELVKV), 648–687 (PGARWISSFDIHPGGDNLIVGSYDRRLLWHDLDLSTRPYK), 691–731 (FHPQ…DLME), and 747–777 (VDSLGVMDVDWHPSEPWCISAGADGTCRLWM).

This sequence belongs to the WD repeat BOP1/ERB1 family. In terms of assembly, component of the NOP7 complex, composed of ERB1, NOP7 and YTM1. The complex is held together by ERB1, which interacts with NOP7 via its N-terminal domain and with YTM1 via a high-affinity interaction between the seven-bladed beta-propeller domains of the 2 proteins. The NOP7 complex associates with the 66S pre-ribosome.

The protein localises to the nucleus. It is found in the nucleolus. Its subcellular location is the nucleoplasm. Component of the NOP7 complex, which is required for maturation of the 25S and 5.8S ribosomal RNAs and formation of the 60S ribosome. The sequence is that of Ribosome biogenesis protein ERB1 from Pyricularia oryzae (strain 70-15 / ATCC MYA-4617 / FGSC 8958) (Rice blast fungus).